The chain runs to 356 residues: Phospho-N-acetylmuramoyl-pentapeptide-transferase (356 aa).

Transmembrane regions (helical) follow at residues Ile-4–His-24, Gly-53–Trp-73, Pro-76–Leu-96, Leu-116–Val-136, Ile-152–Gly-172, Leu-186–Phe-206, Asp-228–Ala-248, Ile-253–Val-273, Leu-278–Val-298, and Phe-333–Val-353.

Belongs to the glycosyltransferase 4 family. MraY subfamily. It depends on Mg(2+) as a cofactor.

It localises to the cell membrane. The catalysed reaction is UDP-N-acetyl-alpha-D-muramoyl-L-alanyl-gamma-D-glutamyl-meso-2,6-diaminopimeloyl-D-alanyl-D-alanine + di-trans,octa-cis-undecaprenyl phosphate = di-trans,octa-cis-undecaprenyl diphospho-N-acetyl-alpha-D-muramoyl-L-alanyl-D-glutamyl-meso-2,6-diaminopimeloyl-D-alanyl-D-alanine + UMP. The protein operates within cell wall biogenesis; peptidoglycan biosynthesis. Functionally, catalyzes the initial step of the lipid cycle reactions in the biosynthesis of the cell wall peptidoglycan: transfers peptidoglycan precursor phospho-MurNAc-pentapeptide from UDP-MurNAc-pentapeptide onto the lipid carrier undecaprenyl phosphate, yielding undecaprenyl-pyrophosphoryl-MurNAc-pentapeptide, known as lipid I. This chain is Phospho-N-acetylmuramoyl-pentapeptide-transferase, found in Cutibacterium acnes (strain DSM 16379 / KPA171202) (Propionibacterium acnes).